Reading from the N-terminus, the 239-residue chain is Octanoyltransferase (239 aa).

The BPL/LPL catalytic domain occupies 48-236 (DGGDELVWLV…AFEAVFGETT (189 aa)). Substrate-binding positions include 87–94 (RGGEYTYH), 167–169 (ALG), and 180–182 (GLS). Cys198 (acyl-thioester intermediate) is an active-site residue.

It belongs to the LipB family.

It localises to the cytoplasm. It carries out the reaction octanoyl-[ACP] + L-lysyl-[protein] = N(6)-octanoyl-L-lysyl-[protein] + holo-[ACP] + H(+). Its pathway is protein modification; protein lipoylation via endogenous pathway; protein N(6)-(lipoyl)lysine from octanoyl-[acyl-carrier-protein]: step 1/2. Catalyzes the transfer of endogenously produced octanoic acid from octanoyl-acyl-carrier-protein onto the lipoyl domains of lipoate-dependent enzymes. Lipoyl-ACP can also act as a substrate although octanoyl-ACP is likely to be the physiological substrate. In Rhizobium johnstonii (strain DSM 114642 / LMG 32736 / 3841) (Rhizobium leguminosarum bv. viciae), this protein is Octanoyltransferase.